Consider the following 423-residue polypeptide: Protein MANNAN SYNTHESIS-RELATED 2 (423 aa).

Residues Met-1–Arg-6 are Cytoplasmic-facing. Residues Gln-7–His-26 traverse the membrane as a helical; Signal-anchor for type II membrane protein segment. Residues Arg-27 to Cys-423 lie on the Lumenal side of the membrane. Residue Asp-264 to Arg-266 coordinates substrate.

It belongs to the glycosyltransferase GT106 family. As to expression, widely expressed.

The protein localises to the golgi apparatus membrane. It participates in glycan biosynthesis. Functionally, glycosyltransferase involved in mannan biosynthesis. The protein is Protein MANNAN SYNTHESIS-RELATED 2 of Arabidopsis thaliana (Mouse-ear cress).